The following is a 487-amino-acid chain: Iron-sulfur cluster assembly SufBD family protein ycf24 (487 aa).

It belongs to the iron-sulfur cluster assembly SufBD family.

The protein localises to the plastid. Its subcellular location is the chloroplast. This chain is Iron-sulfur cluster assembly SufBD family protein ycf24 (ycf24), found in Porphyra purpurea (Red seaweed).